A 212-amino-acid polypeptide reads, in one-letter code: Large ribosomal subunit protein uL3 (212 aa).

Residue glutamine 152 is modified to N5-methylglutamine.

This sequence belongs to the universal ribosomal protein uL3 family. In terms of assembly, part of the 50S ribosomal subunit. Forms a cluster with proteins L14 and L19. In terms of processing, methylated by PrmB.

Functionally, one of the primary rRNA binding proteins, it binds directly near the 3'-end of the 23S rRNA, where it nucleates assembly of the 50S subunit. This Chromohalobacter salexigens (strain ATCC BAA-138 / DSM 3043 / CIP 106854 / NCIMB 13768 / 1H11) protein is Large ribosomal subunit protein uL3.